The chain runs to 309 residues: Probable manganese-dependent inorganic pyrophosphatase (309 aa).

Mn(2+) contacts are provided by His-9, Asp-13, Asp-15, Asp-75, His-97, and Asp-149.

The protein belongs to the PPase class C family. The cofactor is Mn(2+).

The protein resides in the cytoplasm. It catalyses the reaction diphosphate + H2O = 2 phosphate + H(+). This chain is Probable manganese-dependent inorganic pyrophosphatase, found in Bacillus licheniformis (strain ATCC 14580 / DSM 13 / JCM 2505 / CCUG 7422 / NBRC 12200 / NCIMB 9375 / NCTC 10341 / NRRL NRS-1264 / Gibson 46).